The following is a 497-amino-acid chain: Guanosine-5'-triphosphate,3'-diphosphate pyrophosphatase (497 aa).

This sequence belongs to the GppA/Ppx family. GppA subfamily.

It catalyses the reaction guanosine 3'-diphosphate 5'-triphosphate + H2O = guanosine 3',5'-bis(diphosphate) + phosphate + H(+). Its pathway is purine metabolism; ppGpp biosynthesis; ppGpp from GTP: step 2/2. Catalyzes the conversion of pppGpp to ppGpp. Guanosine pentaphosphate (pppGpp) is a cytoplasmic signaling molecule which together with ppGpp controls the 'stringent response', an adaptive process that allows bacteria to respond to amino acid starvation, resulting in the coordinated regulation of numerous cellular activities. This chain is Guanosine-5'-triphosphate,3'-diphosphate pyrophosphatase, found in Vibrio vulnificus (strain YJ016).